Consider the following 58-residue polypeptide: Small ribosomal subunit protein bS21 (58 aa).

Positions 39-58 (DKPSVKKRAKSKAAAKYRSR) are disordered. The segment covering 43–58 (VKKRAKSKAAAKYRSR) has biased composition (basic residues).

The protein belongs to the bacterial ribosomal protein bS21 family.

This chain is Small ribosomal subunit protein bS21, found in Chlamydia abortus (strain DSM 27085 / S26/3) (Chlamydophila abortus).